The following is a 185-amino-acid chain: Ribosome-recycling factor (185 aa).

Positions 127–158 (AVRNTRQDANNKVKKLEKDKEISEDESKKAQE) are disordered.

It belongs to the RRF family.

It localises to the cytoplasm. Its function is as follows. Responsible for the release of ribosomes from messenger RNA at the termination of protein biosynthesis. May increase the efficiency of translation by recycling ribosomes from one round of translation to another. In Helicobacter pylori (strain G27), this protein is Ribosome-recycling factor.